The chain runs to 336 residues: tRNA N6-adenosine threonylcarbamoyltransferase (336 aa).

Fe cation-binding residues include His114 and His118. Substrate is bound by residues 136-140, Asp169, Gly182, Asp186, and Asn275; that span reads LVSGG. Asp301 provides a ligand contact to Fe cation.

Belongs to the KAE1 / TsaD family. Requires Fe(2+) as cofactor.

The protein localises to the cytoplasm. The catalysed reaction is L-threonylcarbamoyladenylate + adenosine(37) in tRNA = N(6)-L-threonylcarbamoyladenosine(37) in tRNA + AMP + H(+). In terms of biological role, required for the formation of a threonylcarbamoyl group on adenosine at position 37 (t(6)A37) in tRNAs that read codons beginning with adenine. Is involved in the transfer of the threonylcarbamoyl moiety of threonylcarbamoyl-AMP (TC-AMP) to the N6 group of A37, together with TsaE and TsaB. TsaD likely plays a direct catalytic role in this reaction. In Streptococcus pneumoniae (strain P1031), this protein is tRNA N6-adenosine threonylcarbamoyltransferase.